Consider the following 801-residue polypeptide: Cadherin-20 (801 aa).

Residues 1-34 (MWTTGRMSNAKSWLGLGTSLYFWALMDLATTVLS) form the signal peptide. The propeptide occupies 35–59 (STPMPEVELDTLFSGKPQSHQRSRR). Residues 60 to 619 (SWVWNQFFVL…AYMLPVSLSR (560 aa)) are Extracellular-facing. Cadherin domains follow at residues 61 to 165 (WVWN…EPKF), 166 to 274 (LDGP…PPRF), 275 to 389 (PQKH…PPVF), 390 to 494 (EPRF…APEF), and 494 to 610 (FPRF…SPEA). N-linked (GlcNAc...) asparagine glycosylation is present at Asn261. Asn420, Asn461, and Asn542 each carry an N-linked (GlcNAc...) asparagine glycan. A helical transmembrane segment spans residues 620-640 (GALIAILACVFVLLVLVLLIL). The Cytoplasmic portion of the chain corresponds to 641 to 801 (SMRRHRKQPY…GASEGPSPLW (161 aa)).

It is found in the cell membrane. In terms of biological role, cadherins are calcium-dependent cell adhesion proteins. They preferentially interact with themselves in a homophilic manner in connecting cells; cadherins may thus contribute to the sorting of heterogeneous cell types. The chain is Cadherin-20 (Cdh20) from Rattus norvegicus (Rat).